The following is a 243-amino-acid chain: Carboxy-S-adenosyl-L-methionine synthase (243 aa).

Residues Y40, G65–S67, D90–N91, D118–I119, N133, and R200 contribute to the S-adenosyl-L-methionine site.

It belongs to the class I-like SAM-binding methyltransferase superfamily. Cx-SAM synthase family. In terms of assembly, homodimer.

It carries out the reaction prephenate + S-adenosyl-L-methionine = carboxy-S-adenosyl-L-methionine + 3-phenylpyruvate + H2O. Its function is as follows. Catalyzes the conversion of S-adenosyl-L-methionine (SAM) to carboxy-S-adenosyl-L-methionine (Cx-SAM). This is Carboxy-S-adenosyl-L-methionine synthase from Shewanella halifaxensis (strain HAW-EB4).